The sequence spans 261 residues: Glucosamine-6-phosphate deaminase (261 aa).

Asp67 (proton acceptor; for enolization step) is an active-site residue. Asp136 serves as the catalytic For ring-opening step. Catalysis depends on His138, which acts as the Proton acceptor; for ring-opening step. Glu143 functions as the For ring-opening step in the catalytic mechanism.

This sequence belongs to the glucosamine/galactosamine-6-phosphate isomerase family. NagB subfamily.

The catalysed reaction is alpha-D-glucosamine 6-phosphate + H2O = beta-D-fructose 6-phosphate + NH4(+). Its pathway is amino-sugar metabolism; N-acetylneuraminate degradation; D-fructose 6-phosphate from N-acetylneuraminate: step 5/5. Functionally, catalyzes the reversible isomerization-deamination of glucosamine 6-phosphate (GlcN6P) to form fructose 6-phosphate (Fru6P) and ammonium ion. This is Glucosamine-6-phosphate deaminase from Mycolicibacterium smegmatis (strain ATCC 700084 / mc(2)155) (Mycobacterium smegmatis).